A 93-amino-acid polypeptide reads, in one-letter code: OMEGA-ectatommitoxin(02)-Rm1c (93 aa).

Positions 1–30 are cleaved as a signal peptide; that stretch reads MKDSYISIVIAYLMVTFILVSSMPIEGEKG. Disulfide bonds link Cys39–Cys52, Cys47–Cys68, and Cys70–Cys79. The 38-residue stretch at 43–80 folds into the EGF-like domain; that stretch reads YENYCFNGKCVHVVAQDEPGKPCYSCICDEFYIGERCG.

This sequence belongs to the EGF domain peptide family. Expressed by the venom gland.

The protein resides in the secreted. Its function is as follows. Ant peptide with probable defensive activity which acts as a potent agonist of the mammalian epidermal growth factor receptor (EGFR). Mimics, both structurally and functionally, vertebrate epidermal growth factor (EGF) peptide hormones. In vivo, intraplantar injection in mice causes long-lasting (several days) hypersensitivity of the injected paw to both mechanical and thermal stimuli. Its long-lasting effect is unusual for venom toxins whose effects are usually immediate. One possible explanation is that it would reduce the duration of a nest attack, discourage future attacks, or enhance the actions of subsequent exposure to other pain-inducing venom peptides. This is OMEGA-ectatommitoxin(02)-Rm1c from Rhytidoponera metallica (Australian green-headed ant).